Here is a 517-residue protein sequence, read N- to C-terminus: Pentatricopeptide repeat-containing protein At1g13040, mitochondrial (517 aa).

Residues 1–57 (MHQTLGAVRLAYRSRIANLVKSGMIDNAVQVFDEMRHSSYRVFSFDYNRFIGVLVRE) constitute a mitochondrion transit peptide. 14 PPR repeats span residues 8–42 (VRLAYRSRIANLVKSGMIDNAVQVFDEMRHSSYRV), 43–77 (FSFDYNRFIGVLVRESRFELAEAIYWDMKPMGFSL), 78–112 (IPFTYSRFISGLCKVKKFDLIDALLSDMETLGFIP), 113–147 (DIWAFNVYLDLLCRENKVGFAVQTFFCMVQRGREP), 148–182 (DVVSYTILINGLFRAGKVTDAVEIWNAMIRSGVSP), 183–218 (DNKACAALVVGLCHARKVDLAYEMVAEEIKSARVKL), 219–253 (STVVYNALISGFCKAGRIEKAEALKSYMSKIGCEP), 254–288 (DLVTYNVLLNYYYDNNMLKRAEGVMAEMVRSGIQL), 289–320 (DAYSYNQLLKRHCRVSHPDKCYNFMVKEMEPR), 324–358 (DVVSYSTLIETFCRASNTRKAYRLFEEMRQKGMVM), 359–393 (NVVTYTSLIKAFLREGNSSVAKKLLDQMTELGLSP), 394–428 (DRIFYTTILDHLCKSGNVDKAYGVFNDMIEHEITP), 429–463 (DAISYNSLISGLCRSGRVTEAIKLFEDMKGKECCP), and 464–498 (DELTFKFIIGGLIRGKKLSAAYKVWDQMMDKGFTL).

This sequence belongs to the PPR family. P subfamily.

It is found in the mitochondrion. This chain is Pentatricopeptide repeat-containing protein At1g13040, mitochondrial, found in Arabidopsis thaliana (Mouse-ear cress).